The primary structure comprises 413 residues: Histidine--tRNA ligase (413 aa).

Belongs to the class-II aminoacyl-tRNA synthetase family. As to quaternary structure, homodimer.

It localises to the cytoplasm. The enzyme catalyses tRNA(His) + L-histidine + ATP = L-histidyl-tRNA(His) + AMP + diphosphate + H(+). The chain is Histidine--tRNA ligase from Geobacter metallireducens (strain ATCC 53774 / DSM 7210 / GS-15).